A 113-amino-acid chain; its full sequence is TYRO protein tyrosine kinase-binding protein (113 aa).

Residues Met1 to Gly21 form the signal peptide. The Extracellular segment spans residues Leu22–Pro40. The helical transmembrane segment at Gly41–Val61 threads the bilayer. Asp50 lines the Ca(2+) pocket. Over Tyr62–Lys113 the chain is Cytoplasmic. The tract at residues Ala75–Lys113 is disordered. In terms of domain architecture, ITAM spans Arg80–Gln108. Polar residues predominate over residues Thr87–Lys113. Phosphotyrosine is present on residues Tyr91 and Tyr102.

The protein belongs to the TYROBP family. In terms of assembly, homodimer; disulfide-linked. Homotrimer; disulfide-linked. Homotetramer; disulfide-linked. Homotrimers and homotetramers form when low levels of partner receptors are available and are competitive with assembly with interacting receptors. They may represent alternative oligomerization states or may be intermediates in the receptor assembly process. Binding of a metal cation aids in homooligomerization through coordination of the metal ion by the subunits of the oligomer. Interacts with TREM1. Interacts with TREM2. Interacts with SIRPB1. Interacts with CLECSF5. Interacts with SIGLEC14. Interacts with CD300LB and CD300E. Interacts with CD300C2. Interacts (via ITAM domain) with SYK (via SH2 domains); activates SYK mediating neutrophil and macrophage integrin-mediated activation. Interacts with KLRC2, KIR2DS3 and KIR2DS5. Interacts with CD300H. Interacts with KIR2DS1. Interacts with KLRD1. Interacts with SIGLEC1. In terms of processing, following ligand binding by associated receptors, tyrosine phosphorylated in the ITAM domain which leads to activation of additional tyrosine kinases and subsequent cell activation. In terms of tissue distribution, expressed at low levels in the early development of the hematopoietic system and in the promonocytic stage and at high levels in mature monocytes. Expressed in hematological cells and tissues such as peripheral blood leukocytes and spleen. Also found in bone marrow, lymph nodes, placenta, lung and liver. Expressed at lower levels in different parts of the brain especially in the basal ganglia and corpus callosum.

It localises to the cell membrane. Functionally, adapter protein which non-covalently associates with activating receptors found on the surface of a variety of immune cells to mediate signaling and cell activation following ligand binding by the receptors. TYROBP is tyrosine-phosphorylated in the ITAM domain following ligand binding by the associated receptors which leads to activation of additional tyrosine kinases and subsequent cell activation. Also has an inhibitory role in some cells. Non-covalently associates with activating receptors of the CD300 family to mediate cell activation. Also mediates cell activation through association with activating receptors of the CD200R family. Required for neutrophil activation mediated by integrin. Required for the activation of myeloid cells mediated by the CLEC5A/MDL1 receptor. Associates with natural killer (NK) cell receptors such as KIR2DS2 and the KLRD1/KLRC2 heterodimer to mediate NK cell activation. Also enhances trafficking and cell surface expression of NK cell receptors KIR2DS1, KIR2DS2 and KIR2DS4 and ensures their stability at the cell surface. Associates with SIRPB1 to mediate activation of myeloid cells such as monocytes and dendritic cells. Associates with TREM1 to mediate activation of neutrophils and monocytes. Associates with TREM2 on monocyte-derived dendritic cells to mediate up-regulation of chemokine receptor CCR7 and dendritic cell maturation and survival. Association with TREM2 mediates cytokine-induced formation of multinucleated giant cells which are formed by the fusion of macrophages. Stabilizes the TREM2 C-terminal fragment (TREM2-CTF) produced by TREM2 ectodomain shedding which suppresses the release of pro-inflammatory cytokines. In microglia, required with TREM2 for phagocytosis of apoptotic neurons. Required with ITGAM/CD11B in microglia to control production of microglial superoxide ions which promote the neuronal apoptosis that occurs during brain development. Promotes pro-inflammatory responses in microglia following nerve injury which accelerates degeneration of injured neurons. Positively regulates the expression of the IRAK3/IRAK-M kinase and IL10 production by liver dendritic cells and inhibits their T cell allostimulatory ability. Negatively regulates B cell proliferation. Required for CSF1-mediated osteoclast cytoskeletal organization. Positively regulates multinucleation during osteoclast development. The polypeptide is TYRO protein tyrosine kinase-binding protein (Homo sapiens (Human)).